Here is a 276-residue protein sequence, read N- to C-terminus: 1-(5-phosphoribosyl)-5-[(5-phosphoribosylamino)methylideneamino] imidazole-4-carboxamide isomerase (276 aa).

This sequence belongs to the HisA/HisF family.

Its subcellular location is the cytoplasm. It carries out the reaction 1-(5-phospho-beta-D-ribosyl)-5-[(5-phospho-beta-D-ribosylamino)methylideneamino]imidazole-4-carboxamide = 5-[(5-phospho-1-deoxy-D-ribulos-1-ylimino)methylamino]-1-(5-phospho-beta-D-ribosyl)imidazole-4-carboxamide. It participates in amino-acid biosynthesis; L-histidine biosynthesis; L-histidine from 5-phospho-alpha-D-ribose 1-diphosphate: step 4/9. This Debaryomyces hansenii (strain ATCC 36239 / CBS 767 / BCRC 21394 / JCM 1990 / NBRC 0083 / IGC 2968) (Yeast) protein is 1-(5-phosphoribosyl)-5-[(5-phosphoribosylamino)methylideneamino] imidazole-4-carboxamide isomerase (HIS6).